A 66-amino-acid polypeptide reads, in one-letter code: UPF0337 protein SpyM3_1723 (66 aa).

A compositionally biased stretch (basic and acidic residues) spans Met-1 to Ile-10. The interval Met-1–Lys-23 is disordered.

Belongs to the UPF0337 (CsbD) family.

The polypeptide is UPF0337 protein SpyM3_1723 (Streptococcus pyogenes serotype M3 (strain ATCC BAA-595 / MGAS315)).